A 258-amino-acid polypeptide reads, in one-letter code: Coiled-coil domain-containing protein 107 (258 aa).

An N-terminal signal peptide occupies residues 1-24 (MASVVSLAGTLGLLLVSALPEVLG). Positions 25–35 (DRRSPDRRAHP) are enriched in basic and acidic residues. The segment at 25 to 63 (DRRSPDRRAHPGDAGQVGPAAAEPRRQSPPSKNQRERAR) is disordered. A helical membrane pass occupies residues 66-86 (ALPLGALYTAAAVAFVLYKCL). The stretch at 106–134 (LQSEQHLAQLTQQLVQTEQHLNSLMAQLD) forms a coiled coil. The disordered stretch occupies residues 203–222 (EPLNWNTGTRNLTPPREMQP).

It is found in the membrane. The sequence is that of Coiled-coil domain-containing protein 107 (CCDC107) from Bos taurus (Bovine).